The chain runs to 142 residues: MKTFTATPETVTRDWFVVDADGKTLGRIATEIATRLRGKHKPEYTPHVDTGDYIIVINAEKVTVTGNKAKGKTYYSHSGFPGGIKQISFEKLQAHKPEMIIEKAVKGMLPKGPLGRAMFRKLKVYAGAEHNHAAQQPQVLDI.

This sequence belongs to the universal ribosomal protein uL13 family. In terms of assembly, part of the 50S ribosomal subunit.

Functionally, this protein is one of the early assembly proteins of the 50S ribosomal subunit, although it is not seen to bind rRNA by itself. It is important during the early stages of 50S assembly. The polypeptide is Large ribosomal subunit protein uL13 (Shewanella putrefaciens (strain CN-32 / ATCC BAA-453)).